The primary structure comprises 321 residues: Zinc finger protein 524 (321 aa).

Polar residues-rich tracts occupy residues 1-14 (MDNP…STLS) and 39-48 (ATTSNRTLKS). Disordered regions lie at residues 1–80 (MDNP…DLLL) and 86–105 (VPYT…SGSK). The segment at residues 49-59 (SLPRKRGRPPR) is a DNA-binding region (a.T hook). C2H2-type zinc fingers lie at residues 109–131 (HFCP…SISH), 137–159 (HVCK…CNIH), 165–187 (FRCV…HRIH), and 193–216 (YQCP…KRKH). The interval 248–321 (GVQEESPEGK…PGAIGHPPVD (74 aa)) is disordered. Residues 262–271 (PISSTTSPLS) show a composition bias toward polar residues. A compositionally biased stretch (gly residues) spans 274–285 (TAGGSAGAGRGQ).

The protein belongs to the krueppel C2H2-type zinc-finger protein family.

The protein resides in the nucleus. Its function is as follows. May be involved in transcriptional regulation. This Mus musculus (Mouse) protein is Zinc finger protein 524 (Znf524).